A 465-amino-acid chain; its full sequence is Ribulose bisphosphate carboxylase large chain (465 aa).

Lys-4 is subject to N6,N6,N6-trimethyllysine. Substrate-binding residues include Xaa-113 and Thr-163. The Proton acceptor role is filled by Lys-165. Residue Lys-167 coordinates substrate. Residues Lys-191, Asp-193, and Glu-194 each coordinate Mg(2+). At Lys-191 the chain carries N6-carboxylysine. The Proton acceptor role is filled by His-284. 3 residues coordinate substrate: Arg-285, His-317, and Ser-369.

This sequence belongs to the RuBisCO large chain family. Type I subfamily. In terms of assembly, heterohexadecamer of 8 large chains and 8 small chains; disulfide-linked. The disulfide link is formed within the large subunit homodimers. It depends on Mg(2+) as a cofactor. Post-translationally, the disulfide bond which can form in the large chain dimeric partners within the hexadecamer appears to be associated with oxidative stress and protein turnover.

The protein localises to the plastid. It localises to the chloroplast. It catalyses the reaction 2 (2R)-3-phosphoglycerate + 2 H(+) = D-ribulose 1,5-bisphosphate + CO2 + H2O. The catalysed reaction is D-ribulose 1,5-bisphosphate + O2 = 2-phosphoglycolate + (2R)-3-phosphoglycerate + 2 H(+). In terms of biological role, ruBisCO catalyzes two reactions: the carboxylation of D-ribulose 1,5-bisphosphate, the primary event in carbon dioxide fixation, as well as the oxidative fragmentation of the pentose substrate in the photorespiration process. Both reactions occur simultaneously and in competition at the same active site. This Cornus obliqua (Silky dogwood) protein is Ribulose bisphosphate carboxylase large chain.